Here is a 159-residue protein sequence, read N- to C-terminus: UPF0178 protein AZC_4000 (159 aa).

The protein belongs to the UPF0178 family.

The sequence is that of UPF0178 protein AZC_4000 from Azorhizobium caulinodans (strain ATCC 43989 / DSM 5975 / JCM 20966 / LMG 6465 / NBRC 14845 / NCIMB 13405 / ORS 571).